The chain runs to 269 residues: Cytochrome c oxidase subunit 3 (269 aa).

The Mitochondrial matrix segment spans residues 1–22 (MTHLERSRHQQHPFHMVMPSPW). Residues 23–41 (PIVVSFALLSLALSTALTM) form a helical membrane-spanning segment. Residues 42-48 (HGYIGNM) are Mitochondrial intermembrane-facing. Residues 49 to 73 (NMVYLALFVLLTSSILWFRDIVAEA) traverse the membrane as a helical segment. The Mitochondrial matrix segment spans residues 74-80 (TYLGDHT). The helical transmembrane segment at 81–114 (MAVRKGINLGFLMFVLSEVLIFAGLFWAYFHSAM) threads the bilayer. At 115 to 137 (SPDVTLGACWPPVGIEAVQPTEL) the chain is on the mitochondrial intermembrane side. A helical transmembrane segment spans residues 138 to 161 (PLLNTIILLSSGATVTYSHHALIA). Over 162–164 (GNR) the chain is Mitochondrial matrix. The helical transmembrane segment at 165–188 (NKALSGLLITFWLIVIFVTCQYIE) threads the bilayer. Residues 189 to 201 (YTNAAFTISDGVY) are Mitochondrial intermembrane-facing. Residues 202–230 (GSVFYAGTGLHFLHMVMLAAMLGVNYWRM) traverse the membrane as a helical segment. Topologically, residues 231-248 (RNYHLTAGHHVGYETTII) are mitochondrial matrix. A helical membrane pass occupies residues 249–265 (YTHVLDVIWLFLYVVFY). Residues 266 to 269 (WWGV) lie on the Mitochondrial intermembrane side of the membrane.

It belongs to the cytochrome c oxidase subunit 3 family. In terms of assembly, component of the cytochrome c oxidase (complex IV, CIV), a multisubunit enzyme composed of 12 subunits. The complex is composed of a catalytic core of 3 subunits COX1, COX2 and COX3, encoded in the mitochondrial DNA, and 9 supernumerary subunits COX4, COX5A (or COX5B), COX6, COX7, COX8, COX9, COX12, COX13 and COX26, which are encoded in the nuclear genome. The complex exists as a monomer or a dimer and forms supercomplexes (SCs) in the inner mitochondrial membrane with a dimer of ubiquinol-cytochrome c oxidoreductase (cytochrome b-c1 complex, complex III, CIII), resulting in 2 different assemblies (supercomplexes III(2)IV and III(2)IV(2)). The N-terminus is blocked.

The protein localises to the mitochondrion inner membrane. It carries out the reaction 4 Fe(II)-[cytochrome c] + O2 + 8 H(+)(in) = 4 Fe(III)-[cytochrome c] + 2 H2O + 4 H(+)(out). Its function is as follows. Component of the cytochrome c oxidase, the last enzyme in the mitochondrial electron transport chain which drives oxidative phosphorylation. The respiratory chain contains 3 multisubunit complexes succinate dehydrogenase (complex II, CII), ubiquinol-cytochrome c oxidoreductase (cytochrome b-c1 complex, complex III, CIII) and cytochrome c oxidase (complex IV, CIV), that cooperate to transfer electrons derived from NADH and succinate to molecular oxygen, creating an electrochemical gradient over the inner membrane that drives transmembrane transport and the ATP synthase. Cytochrome c oxidase is the component of the respiratory chain that catalyzes the reduction of oxygen to water. Electrons originating from reduced cytochrome c in the intermembrane space (IMS) are transferred via the dinuclear copper A center (CU(A)) of COX2 and heme A of COX1 to the active site in COX1, a binuclear center (BNC) formed by heme A3 and copper B (CU(B)). The BNC reduces molecular oxygen to 2 water molecules using 4 electrons from cytochrome c in the IMS and 4 protons from the mitochondrial matrix. COX3 is a catalytic core subunit. The polypeptide is Cytochrome c oxidase subunit 3 (COX3) (Saccharomyces cerevisiae (strain ATCC 204508 / S288c) (Baker's yeast)).